A 569-amino-acid chain; its full sequence is Laccase-13 (569 aa).

Positions 1 to 21 are cleaved as a signal peptide; sequence MEQLRPFFLLLAIFVASLVNA. Plastocyanin-like domains follow at residues 29-145 and 157-308; these read VIQE…PPLS and REIT…YKDA. The N-linked (GlcNAc...) asparagine glycan is linked to Asn-75. Positions 79, 81, 124, and 126 each coordinate Cu cation. N-linked (GlcNAc...) asparagine glycans are attached at residues Asn-186, Asn-296, Asn-330, Asn-381, Asn-391, and Asn-432. In terms of domain architecture, Plastocyanin-like 3 spans 418–553; sequence DFPPTPPVTF…AMVFLVENGE (136 aa). Positions 470, 473, 475, 532, 533, 534, and 538 each coordinate Cu cation.

The protein belongs to the multicopper oxidase family. Cu cation serves as cofactor. Mostly expressed in roots. Also detected in leaves, stems and flowers but not in siliques.

It localises to the secreted. It is found in the extracellular space. The protein resides in the apoplast. It catalyses the reaction 4 hydroquinone + O2 = 4 benzosemiquinone + 2 H2O. Functionally, lignin degradation and detoxification of lignin-derived products. This is Laccase-13 (LAC13) from Arabidopsis thaliana (Mouse-ear cress).